The following is a 416-amino-acid chain: Multifunctional CCA protein (416 aa).

ATP contacts are provided by Gly-8 and Arg-11. 2 residues coordinate CTP: Gly-8 and Arg-11. Residues Asp-21 and Asp-23 each contribute to the Mg(2+) site. 3 residues coordinate ATP: Arg-91, Arg-137, and Arg-140. CTP contacts are provided by Arg-91, Arg-137, and Arg-140. Residues 228-329 (TGVHTLMVLA…VKIFDKADFW (102 aa)) form the HD domain.

Belongs to the tRNA nucleotidyltransferase/poly(A) polymerase family. Bacterial CCA-adding enzyme type 1 subfamily. Monomer. Can also form homodimers and oligomers. The cofactor is Mg(2+). Requires Ni(2+) as cofactor.

The catalysed reaction is a tRNA precursor + 2 CTP + ATP = a tRNA with a 3' CCA end + 3 diphosphate. It catalyses the reaction a tRNA with a 3' CCA end + 2 CTP + ATP = a tRNA with a 3' CCACCA end + 3 diphosphate. Catalyzes the addition and repair of the essential 3'-terminal CCA sequence in tRNAs without using a nucleic acid template. Adds these three nucleotides in the order of C, C, and A to the tRNA nucleotide-73, using CTP and ATP as substrates and producing inorganic pyrophosphate. tRNA 3'-terminal CCA addition is required both for tRNA processing and repair. Also involved in tRNA surveillance by mediating tandem CCA addition to generate a CCACCA at the 3' terminus of unstable tRNAs. While stable tRNAs receive only 3'-terminal CCA, unstable tRNAs are marked with CCACCA and rapidly degraded. In Shewanella baltica (strain OS185), this protein is Multifunctional CCA protein.